Here is a 415-residue protein sequence, read N- to C-terminus: Gamma-glutamyl phosphate reductase (415 aa).

This sequence belongs to the gamma-glutamyl phosphate reductase family.

It localises to the cytoplasm. The catalysed reaction is L-glutamate 5-semialdehyde + phosphate + NADP(+) = L-glutamyl 5-phosphate + NADPH + H(+). Its pathway is amino-acid biosynthesis; L-proline biosynthesis; L-glutamate 5-semialdehyde from L-glutamate: step 2/2. Catalyzes the NADPH-dependent reduction of L-glutamate 5-phosphate into L-glutamate 5-semialdehyde and phosphate. The product spontaneously undergoes cyclization to form 1-pyrroline-5-carboxylate. This chain is Gamma-glutamyl phosphate reductase, found in Oceanobacillus iheyensis (strain DSM 14371 / CIP 107618 / JCM 11309 / KCTC 3954 / HTE831).